A 695-amino-acid polypeptide reads, in one-letter code: Putative ATP-dependent RNA helicase L540 (695 aa).

The 167-residue stretch at 53–219 folds into the Helicase ATP-binding domain; that stretch reads LSALENYQLV…FNSVDSTVID (167 aa). 66–73 contributes to the ATP binding site; it reads SSTGSGKS. Positions 164-167 match the DEAH box motif; sequence DEAH. The Helicase C-terminal domain occupies 247–434; that stretch reads LIEDLIHQQI…GINMMNQLMD (188 aa).

It belongs to the DEAD box helicase family. DEAH subfamily.

Its subcellular location is the virion. It catalyses the reaction ATP + H2O = ADP + phosphate + H(+). The polypeptide is Putative ATP-dependent RNA helicase L540 (Acanthamoeba polyphaga (Amoeba)).